A 191-amino-acid polypeptide reads, in one-letter code: Small ribosomal subunit protein uS9c (191 aa).

Residues 166–191 are disordered; the sequence is TQDSRVKERRKYGLKKARKASQYHKR. Residues 172 to 191 show a composition bias toward basic residues; it reads KERRKYGLKKARKASQYHKR.

It belongs to the universal ribosomal protein uS9 family.

It localises to the plastid. The protein localises to the chloroplast. The sequence is that of Small ribosomal subunit protein uS9c (rps9) from Chlamydomonas reinhardtii (Chlamydomonas smithii).